A 205-amino-acid polypeptide reads, in one-letter code: SREBP regulating gene protein (205 aa).

Over 1–16 the chain is Cytoplasmic; sequence MALYVSMVWRKILRKR. Residues 17–35 traverse the membrane as a helical segment; it reads WVLGVVFGLSLIYFLTSTF. Residues 36–205 are Lumenal-facing; the sequence is KQEERTVRDR…GESPPELLPI (170 aa). N67 carries an N-linked (GlcNAc...) asparagine glycan.

Belongs to the SPRING family.

It localises to the golgi apparatus membrane. Functionally, positively regulates hepatic SREBP signaling pathway by modulating the proper localization of SCAP (SREBP cleavage-activating protein) to the endoplasmic reticulum, thereby controlling the level of functional SCAP. The polypeptide is SREBP regulating gene protein (Xenopus laevis (African clawed frog)).